The following is a 457-amino-acid chain: MQQYLTEARKLSALAVPVIIAQVSQTSMGVVDTIMAGAYSATDMAAVAVGTSIWLPAILFGHGLLLALTPVVAQLNGSGRRDRISHQVRQSFFLAAIISVLTMLVLYQGEYAINLMSNDSPELAAKAIGYLHALLWGVPGYLFYQVLRCQCEGLSKTYPGMMIGFIGLLINIPINYIFIHGKFGMPELGGVGCGVATASVYWIMMLLMMLYTQRASWLRDIRLHRPAFRPDFTVLKRLFGLGLPIALALLFEVTLFAVVALLVLPLGVVNVAGHQIALNFSSLMFVLPLSVGVATTIRVGHRLGEGSVDNARIAAHTGIMAGVALACCTAIFTTLLREPIALLYNQDPLVVAMASQLMLLAAVYQISDAVQVIGTGVLRGYKDTRSIFYITFVAYWVLGLPSGYLLALTDVIVPRMGPAGFWCGFIIGLTAAAVMMVTRIRFLQRQPAARILARAAR.

12 helical membrane passes run L11–V31, I53–A73, F93–I113, A127–L147, P159–I179, G190–L210, L249–V269, I276–T296, I313–T333, L357–V377, I387–A407, and G417–V437.

The protein belongs to the multi antimicrobial extrusion (MATE) (TC 2.A.66.1) family. MdtK subfamily.

It is found in the cell inner membrane. Functionally, multidrug efflux pump that functions probably as a Na(+)/drug antiporter. This chain is Multidrug resistance protein MdtK, found in Pectobacterium atrosepticum (strain SCRI 1043 / ATCC BAA-672) (Erwinia carotovora subsp. atroseptica).